The chain runs to 545 residues: CTP synthase (545 aa).

The segment at threonine 2 to leucine 266 is amidoligase domain. Residue serine 14 participates in CTP binding. Serine 14 serves as a coordination point for UTP. ATP is bound by residues serine 15–isoleucine 20 and aspartate 72. Residues aspartate 72 and glutamate 140 each contribute to the Mg(2+) site. CTP-binding positions include aspartate 147–glutamate 149, lysine 187–glutamine 192, and lysine 223. UTP-binding positions include lysine 187 to glutamine 192 and lysine 223. Lysine 239–valine 241 provides a ligand contact to ATP. The Glutamine amidotransferase type-1 domain occupies threonine 291 to arginine 542. Residue glycine 352 participates in L-glutamine binding. The Nucleophile; for glutamine hydrolysis role is filled by cysteine 379. L-glutamine is bound by residues leucine 380–glutamine 383, glutamate 403, and arginine 470. Active-site residues include histidine 515 and glutamate 517.

This sequence belongs to the CTP synthase family. In terms of assembly, homotetramer.

It carries out the reaction UTP + L-glutamine + ATP + H2O = CTP + L-glutamate + ADP + phosphate + 2 H(+). The enzyme catalyses L-glutamine + H2O = L-glutamate + NH4(+). The catalysed reaction is UTP + NH4(+) + ATP = CTP + ADP + phosphate + 2 H(+). The protein operates within pyrimidine metabolism; CTP biosynthesis via de novo pathway; CTP from UDP: step 2/2. With respect to regulation, allosterically activated by GTP, when glutamine is the substrate; GTP has no effect on the reaction when ammonia is the substrate. The allosteric effector GTP functions by stabilizing the protein conformation that binds the tetrahedral intermediate(s) formed during glutamine hydrolysis. Inhibited by the product CTP, via allosteric rather than competitive inhibition. Its function is as follows. Catalyzes the ATP-dependent amination of UTP to CTP with either L-glutamine or ammonia as the source of nitrogen. Regulates intracellular CTP levels through interactions with the four ribonucleotide triphosphates. The protein is CTP synthase of Salmonella typhi.